Consider the following 93-residue polypeptide: Protein E7 (93 aa).

The segment at 1 to 42 is E7 terminal domain; sequence MRGETPTLKDIVLFDIPTCETPIDLYCYEQLDSSDEDDQAKQ. The LXCXE motif; interaction with host RB1 and TMEM173/STING signature appears at 25 to 29; it reads LYCYE. A zinc finger lies at 53-89; it reads CTQCYKSVKLVVQCTEADIRNLQQMLLGTLDIVCPLC. The Nuclear export signal motif lies at 71–79; sequence IRNLQQMLL.

Belongs to the papillomaviridae E7 protein family. Homodimer. Homooligomer. Interacts with host RB1; this interaction induces dissociation of RB1-E2F1 complex thereby disrupting RB1 activity. Interacts with host EP300; this interaction represses EP300 transcriptional activity. Interacts with protein E2; this interaction inhibits E7 oncogenic activity. Interacts with host TMEM173/STING; this interaction impairs the ability of TMEM173/STING to sense cytosolic DNA and promote the production of type I interferon (IFN-alpha and IFN-beta). In terms of processing, highly phosphorylated.

The protein localises to the host cytoplasm. The protein resides in the host nucleus. Its function is as follows. Plays a role in viral genome replication by driving entry of quiescent cells into the cell cycle. Stimulation of progression from G1 to S phase allows the virus to efficiently use the cellular DNA replicating machinery to achieve viral genome replication. E7 protein has both transforming and trans-activating activities. Induces the disassembly of the E2F1 transcription factor from RB1, with subsequent transcriptional activation of E2F1-regulated S-phase genes. Interferes with host histone deacetylation mediated by HDAC1 and HDAC2, leading to transcription activation. Also plays a role in the inhibition of both antiviral and antiproliferative functions of host interferon alpha. Interaction with host TMEM173/STING impairs the ability of TMEM173/STING to sense cytosolic DNA and promote the production of type I interferon (IFN-alpha and IFN-beta). This Human papillomavirus 42 protein is Protein E7.